Consider the following 156-residue polypeptide: Small ribosomal subunit protein uS7 (156 aa).

This sequence belongs to the universal ribosomal protein uS7 family. Part of the 30S ribosomal subunit. Contacts proteins S9 and S11.

In terms of biological role, one of the primary rRNA binding proteins, it binds directly to 16S rRNA where it nucleates assembly of the head domain of the 30S subunit. Is located at the subunit interface close to the decoding center, probably blocks exit of the E-site tRNA. This chain is Small ribosomal subunit protein uS7, found in Vibrio campbellii (strain ATCC BAA-1116).